We begin with the raw amino-acid sequence, 49 residues long: Large ribosomal subunit protein bL33 (49 aa).

Belongs to the bacterial ribosomal protein bL33 family.

The sequence is that of Large ribosomal subunit protein bL33 from Nitratidesulfovibrio vulgaris (strain ATCC 29579 / DSM 644 / CCUG 34227 / NCIMB 8303 / VKM B-1760 / Hildenborough) (Desulfovibrio vulgaris).